Consider the following 141-residue polypeptide: Large ribosomal subunit protein uL11 (141 aa).

Belongs to the universal ribosomal protein uL11 family. In terms of assembly, part of the ribosomal stalk of the 50S ribosomal subunit. Interacts with L10 and the large rRNA to form the base of the stalk. L10 forms an elongated spine to which L12 dimers bind in a sequential fashion forming a multimeric L10(L12)X complex. In terms of processing, one or more lysine residues are methylated.

Its function is as follows. Forms part of the ribosomal stalk which helps the ribosome interact with GTP-bound translation factors. The protein is Large ribosomal subunit protein uL11 of Chlorobaculum parvum (strain DSM 263 / NCIMB 8327) (Chlorobium vibrioforme subsp. thiosulfatophilum).